We begin with the raw amino-acid sequence, 622 residues long: Solute carrier family 2, facilitated glucose transporter member 12 (622 aa).

A disordered region spans residues 1 to 26 (MVPVENTEGPNLLNQKGREAETEGSC). Topologically, residues 1–44 (MVPVENTEGPNLLNQKGREAETEGSCGASGGGHPACAGGPSMFT) are cytoplasmic. Residues 45–65 (FLTSVTAAISGLLVGYELGLI) form a helical membrane-spanning segment. Topologically, residues 66-84 (SGALLQIRTLLALTCHEQE) are extracellular. Residues 85-105 (MVVSSLLIGAFLASLTGGVLI) form a helical membrane-spanning segment. Over 106-111 (DRYGRR) the chain is Cytoplasmic. A helical transmembrane segment spans residues 112–132 (LAIILSSCLLGLGSLVLIMSL). The Extracellular portion of the chain corresponds to 133-141 (SYTLLIMGR). A helical transmembrane segment spans residues 142-162 (VAIGVSISLSSIATCVYIAEI). Residues 163–168 (APQHRR) lie on the Cytoplasmic side of the membrane. Residues 169–189 (GLLVSLNELMIVTGILFAYIS) traverse the membrane as a helical segment. The Extracellular portion of the chain corresponds to 190 to 201 (NYAFANISNGWK). N195 carries N-linked (GlcNAc...) asparagine glycosylation. Residues 202–222 (YMFGLVIPLGVLQAIAMYFLP) traverse the membrane as a helical segment. At 223–282 (PSPRFLVMKGQEESAGKVLRKLRVISDTTEELTLIKSSLKDEYQYSFWDLFRSKDNMRTR) the chain is on the cytoplasmic side. Residues 283–303 (ILIGLTLVFFVQTTGQPNILF) form a helical membrane-spanning segment. Over 304–321 (YASTVLKSVGFQSNEAAS) the chain is Extracellular. The helical transmembrane segment at 322–342 (LASTGVGVVKVVSTIPATLLV) threads the bilayer. The Cytoplasmic segment spans residues 343 to 349 (DHIGSKT). The helical transmembrane segment at 350 to 370 (FLCIGSSVMSASLLTMGIVNL) threads the bilayer. Residues 371-471 (NINMNFTNIC…PAAYKWLSLA (101 aa)) lie on the Extracellular side of the membrane. N-linked (GlcNAc...) asparagine glycosylation is found at N375, N387, N400, and N405. The helical transmembrane segment at 472–492 (SLLVYVAAFSIGLGPMPWLVL) threads the bilayer. The Cytoplasmic portion of the chain corresponds to 493–503 (SEIFPGGIRGR). The helical transmembrane segment at 504 to 524 (AMALTSSMNWGVNLLISLTFL) threads the bilayer. Topologically, residues 525–533 (TVTDLIGLS) are extracellular. The chain crosses the membrane as a helical span at residues 534–554 (WVCFIYTIMSLASLAFVVLFI). Topologically, residues 555-622 (PETKGCSLEQ…GQSQRPSPDT (68 aa)) are cytoplasmic.

Belongs to the major facilitator superfamily. Sugar transporter (TC 2.A.1.1) family. Glucose transporter subfamily. Expressed in skeletal muscle, heart, brain, kidney, spleen, adipose tissues and to a lesser extent in small intestine and lung.

It localises to the cell membrane. It is found in the endomembrane system. The protein localises to the cytoplasm. Its subcellular location is the perinuclear region. It carries out the reaction D-glucose(out) = D-glucose(in). Insulin-independent facilitative glucose transporter. In Mus musculus (Mouse), this protein is Solute carrier family 2, facilitated glucose transporter member 12.